Here is a 364-residue protein sequence, read N- to C-terminus: Probable UDP-arabinopyranose mutase 4 (364 aa).

The short motif at 106–108 (DDD) is the DXD motif element. Arginine 154 is a glycosylation site (N-linked (Glc...) arginine).

Belongs to the RGP family. Heteromers with RGP1 and RGP2. It depends on Mn(2+) as a cofactor. Mg(2+) is required as a cofactor. Post-translationally, reversibly glycosylated in vitro by UDP-glucose, UDP-xylose and UDP-galactose, but not UDP-mannose. In terms of tissue distribution, specifically expressed in developing seeds.

It is found in the cytoplasm. The protein localises to the cytosol. Its subcellular location is the golgi apparatus. It carries out the reaction UDP-beta-L-arabinofuranose = UDP-beta-L-arabinopyranose. Functionally, probable UDP-L-arabinose mutase involved in the biosynthesis of cell wall non-cellulosic polysaccharides. The chain is Probable UDP-arabinopyranose mutase 4 from Arabidopsis thaliana (Mouse-ear cress).